A 143-amino-acid chain; its full sequence is Anti-sigma F factor (143 aa).

The protein belongs to the anti-sigma-factor family.

The catalysed reaction is L-seryl-[protein] + ATP = O-phospho-L-seryl-[protein] + ADP + H(+). The enzyme catalyses L-threonyl-[protein] + ATP = O-phospho-L-threonyl-[protein] + ADP + H(+). Its function is as follows. Binds to sigma F and blocks its ability to form an RNA polymerase holoenzyme (E-sigma F). Phosphorylates SpoIIAA on a serine residue. This phosphorylation may enable SpoIIAA to act as an anti-anti-sigma factor that counteracts SpoIIAB and thus releases sigma F from inhibition. The chain is Anti-sigma F factor from Clostridium botulinum (strain Eklund 17B / Type B).